A 293-amino-acid chain; its full sequence is NAD kinase (293 aa).

Asp-73 serves as the catalytic Proton acceptor. NAD(+)-binding positions include 73-74 (DG), 147-148 (NE), His-158, Arg-175, Asp-177, 188-193 (TAYSLS), and Gln-248.

The protein belongs to the NAD kinase family. Requires a divalent metal cation as cofactor.

Its subcellular location is the cytoplasm. It carries out the reaction NAD(+) + ATP = ADP + NADP(+) + H(+). Its function is as follows. Involved in the regulation of the intracellular balance of NAD and NADP, and is a key enzyme in the biosynthesis of NADP. Catalyzes specifically the phosphorylation on 2'-hydroxyl of the adenosine moiety of NAD to yield NADP. The protein is NAD kinase of Photobacterium profundum (strain SS9).